We begin with the raw amino-acid sequence, 278 residues long: Undecaprenyl-diphosphatase (278 aa).

Transmembrane regions (helical) follow at residues 49–69 (ANTFKIVIQLGSILAVIVVFW), 97–117 (HVLIGLLPAAVLGLLFEDFID), 120–140 (LFSIDTVIIGLAAGAILMIAA), 197–217 (ADFTFIMAVPIMFGASALSLV), 226–246 (GDLGFYVVGFIASFGFALLSI), and 258–278 (LVPFAIYRLVLAAVLAVIVYM).

The protein belongs to the UppP family.

It is found in the cell membrane. The enzyme catalyses di-trans,octa-cis-undecaprenyl diphosphate + H2O = di-trans,octa-cis-undecaprenyl phosphate + phosphate + H(+). Functionally, catalyzes the dephosphorylation of undecaprenyl diphosphate (UPP). Confers resistance to bacitracin. This Exiguobacterium sibiricum (strain DSM 17290 / CCUG 55495 / CIP 109462 / JCM 13490 / 255-15) protein is Undecaprenyl-diphosphatase.